The chain runs to 168 residues: EFIEVSEESFKGQWSVLCFYPADFTFVCPTELEDLQNEYAALKELGVEVFSASTDTHFTHKGWHDSSETIGKITYAMIGDPSQTLSRNFDVLNEVSGLADRGTFIIDPDGVVQAAEINAEGIGRDASTLVNKIKAAQYVRNNPGEVCPAKWQEGDETLKPSLDLVGKI.

The region spanning 1–138 is the Thioredoxin domain; that stretch reads EFIEVSEESF…LVNKIKAAQY (138 aa). Catalysis depends on Cys28, which acts as the Cysteine sulfenic acid (-SOH) intermediate.

It belongs to the peroxiredoxin family. AhpC/Prx1 subfamily. As to quaternary structure, homodimer; disulfide-linked, upon oxidation. 5 homodimers assemble to form a ring-like decamer.

Its subcellular location is the cytoplasm. The enzyme catalyses a hydroperoxide + NADH + H(+) = an alcohol + NAD(+) + H2O. Its function is as follows. Thiol-specific peroxidase that catalyzes the reduction of hydrogen peroxide and organic hydroperoxides to water and alcohols, respectively. Plays a role in cell protection against oxidative stress by detoxifying peroxides. This chain is Alkyl hydroperoxide reductase C, found in Ferdinandcohnia aciditolerans (strain JCM 32973 / CCTCC AB 2017280 / YN-1) (Bacillus aciditolerans).